We begin with the raw amino-acid sequence, 327 residues long: Immediate early response gene 5 protein (327 aa).

2 disordered regions span residues 59 to 166 and 227 to 313; these read GPAG…GVFP and GPAG…DKPV. A compositionally biased stretch (low complexity) spans 71–84; sequence QPGEPAAGPPAGWG. Residues 253–262 show a composition bias toward acidic residues; that stretch reads GEDDDAEEME. The segment covering 265 to 278 has biased composition (polar residues); the sequence is NVANLISIFGSSFS.

It belongs to the IER family. Monomer. Homodimer. Associates with the catalytic subunit of protein phosphatase PP2A. Interacts (via N- and C-terminal regions) with PPP2R2B. Interacts with PPP2R2A, PPP2R2C and PPP2R2D. Interacts (via N-terminus) with RPS6KB1. Interacts (via central region) with HSF1; this interaction promotes PPP2CA-induced HSF1 dephosphorylation, leading to enhanced HSF1 transcriptional activity. Expressed in acute myeloid leukemia (AML) cells.

It is found in the nucleus. Its subcellular location is the cytoplasm. Plays a role as a transcription factor. Mediates positive transcriptional regulation of several chaperone genes during the heat shock response in a HSF1-dependent manner. Mediates negative transcriptional regulation of CDC25B expression. Plays a role in the dephosphorylation of the heat shock factor HSF1 and ribosomal protein S6 kinase (S6K) by the protein phosphatase PP2A. Involved in the regulation of cell proliferation and resistance to thermal stress. Involved in the cell cycle checkpoint and survival in response to ionizing radiation. Associates with chromatin to the CDC25B promoter. In Homo sapiens (Human), this protein is Immediate early response gene 5 protein (IER5).